Consider the following 755-residue polypeptide: Elongation factor G, mitochondrial (755 aa).

Residues Met1 to Cys38 constitute a mitochondrion transit peptide. The tr-type G domain maps to Lys63–Ser344. GTP is bound by residues Ala72–Thr79, Asp143–His147, and Asn197–Asp200.

This sequence belongs to the TRAFAC class translation factor GTPase superfamily. Classic translation factor GTPase family. EF-G/EF-2 subfamily.

The protein localises to the mitochondrion. Its pathway is protein biosynthesis; polypeptide chain elongation. Its function is as follows. Mitochondrial GTPase that catalyzes the GTP-dependent ribosomal translocation step during translation elongation. During this step, the ribosome changes from the pre-translocational (PRE) to the post-translocational (POST) state as the newly formed A-site-bound peptidyl-tRNA and P-site-bound deacylated tRNA move to the P and E sites, respectively. Catalyzes the coordinated movement of the two tRNA molecules, the mRNA and conformational changes in the ribosome. The sequence is that of Elongation factor G, mitochondrial from Kluyveromyces lactis (strain ATCC 8585 / CBS 2359 / DSM 70799 / NBRC 1267 / NRRL Y-1140 / WM37) (Yeast).